Reading from the N-terminus, the 68-residue chain is Small ribosomal subunit protein eS17 (68 aa).

This sequence belongs to the eukaryotic ribosomal protein eS17 family.

The protein is Small ribosomal subunit protein eS17 of Staphylothermus marinus (strain ATCC 43588 / DSM 3639 / JCM 9404 / F1).